The chain runs to 230 residues: Urease accessory protein UreE (230 aa).

Basic and acidic residues-rich tracts occupy residues 182–193 (HVHVDSPLDEPH) and 204–230 (SHGDGHSHSHSHDHDHDHRHDDHDHKH). Positions 182-230 (HVHVDSPLDEPHGSGLHVHAIHSHGDGHSHSHSHDHDHDHRHDDHDHKH) are disordered.

The protein belongs to the UreE family.

It is found in the cytoplasm. Functionally, involved in urease metallocenter assembly. Binds nickel. Probably functions as a nickel donor during metallocenter assembly. This Yersinia mollaretii protein is Urease accessory protein UreE.